A 447-amino-acid chain; its full sequence is KICSTOR complex protein ITFG2 (447 aa).

One copy of the FG-GAP 1; atypical repeat lies at 19–48 (FPHAICLGDVDNDTLNELVVGDTSGKVSVY). At serine 104 the chain carries Phosphoserine. The stretch at 126-155 (NTKVMLISDIDGDGCRELVVGYTDRVVRAF) is one FG-GAP 2; atypical repeat. A Phosphoserine modification is found at serine 220.

Part of the KICSTOR complex composed of KPTN, ITFG2, KICS2 and SZT2. SZT2 probably serves as a link between the other three proteins in the KICSTOR complex and may mediate the direct interaction with the GATOR complex via GATOR1. The KICSTOR complex interacts directly with the GATOR1 complex and most probably indirectly with the GATOR2 complex in an amino acid-independent manner.

It localises to the lysosome membrane. Functionally, as part of the KICSTOR complex functions in the amino acid-sensing branch of the TORC1 signaling pathway. Recruits, in an amino acid-independent manner, the GATOR1 complex to the lysosomal membranes and allows its interaction with GATOR2 and the RAG GTPases. Functions upstream of the RAG GTPases and is required to negatively regulate mTORC1 signaling in absence of amino acids. In absence of the KICSTOR complex mTORC1 is constitutively localized to the lysosome and activated. The KICSTOR complex is also probably involved in the regulation of mTORC1 by glucose. This Homo sapiens (Human) protein is KICSTOR complex protein ITFG2.